We begin with the raw amino-acid sequence, 496 residues long: Transactivator/viroplasmin protein (496 aa).

The tract at residues 102 to 128 (RPNQGIQIPKKNEDHSSSSSKEEKGIQ) is disordered. Residues 111–128 (KKNEDHSSSSSKEEKGIQ) are compositionally biased toward basic and acidic residues.

Belongs to the caulimoviridae viroplasmin family.

The protein resides in the host cytoplasm. Functionally, enhances the translation of downstream ORFs on polycistronic mRNAs derived from carnation etched ring virus. In Dianthus caryophyllus (Carnation), this protein is Transactivator/viroplasmin protein.